The sequence spans 450 residues: Protein tweety homolog 1 (450 aa).

Residues 1–43 lie on the Extracellular side of the membrane; the sequence is MGAPPGYRPSAWVHLLHQLPRADFQLRPVPSGFAPQEQEYQQA. The chain crosses the membrane as a helical span at residues 44-64; the sequence is LLLVAALAGLGLGLSLIFIAV. The Cytoplasmic portion of the chain corresponds to 65–88; the sequence is YLIRFCCCRPPEPPGSKTPSPGGG. Residues 89 to 109 form a helical membrane-spanning segment; sequence CVTWSCIVALLAGCIGIGIGF. Residues 110–214 lie on the Extracellular side of the membrane; the sequence is YGNSETSDGV…DVSFVEEYRW (105 aa). N-linked (GlcNAc...) asparagine glycosylation occurs at N130. The helical transmembrane segment at 215-235 threads the bilayer; the sequence is LAYVLLLLLELLVCLFTLLGL. Residues 236–240 lie on the Cytoplasmic side of the membrane; the sequence is AKQSK. The chain crosses the membrane as a helical span at residues 241–261; sequence WLVIVMTVMSLLVLVLSWGSM. Topologically, residues 262–390 are extracellular; the sequence is GLEAATAVGL…LRGLCEDALE (129 aa). N-linked (GlcNAc...) asparagine glycosylation is found at N284 and N355. The cysteines at positions 303 and 370 are disulfide-linked. A helical membrane pass occupies residues 391–411; it reads GLLFLLLFSLLSAGALATALC. The Cytoplasmic segment spans residues 412–450; it reads SLPRAWALFPPSDDYDDTDDDDPFNPQESKRFVQWQSSI. The segment at 428 to 450 is disordered; the sequence is DTDDDDPFNPQESKRFVQWQSSI. At S440 the chain carries Phosphoserine.

Belongs to the tweety family. Homotetramer; disulfide-linked. Homodimer. N-glycosylated. Contains high-mannose, hybrid and complex oligosaccharides.

Its subcellular location is the cell membrane. It catalyses the reaction chloride(in) = chloride(out). The enzyme catalyses L-glutamate(out) = L-glutamate(in). Its function is as follows. Calcium-independent, swelling-dependent volume-regulated anion channel (VRAC-swell) which plays a pivotal role in the process of regulatory volume decrease (RVD) in the brain through the efflux of anions like chloride and organic osmolytes like glutamate. This Macaca fascicularis (Crab-eating macaque) protein is Protein tweety homolog 1 (TTYH1).